The chain runs to 315 residues: ATP synthase gamma chain (315 aa).

The protein belongs to the ATPase gamma chain family. As to quaternary structure, F-type ATPases have 2 components, CF(1) - the catalytic core - and CF(0) - the membrane proton channel. CF(1) has five subunits: alpha(3), beta(3), gamma(1), delta(1), epsilon(1). CF(0) has three main subunits: a, b and c.

The protein localises to the cellular thylakoid membrane. Functionally, produces ATP from ADP in the presence of a proton gradient across the membrane. The gamma chain is believed to be important in regulating ATPase activity and the flow of protons through the CF(0) complex. The polypeptide is ATP synthase gamma chain (Synechococcus sp. (strain RCC307)).